The sequence spans 75 residues: Beta-defensin 42 (75 aa).

The N-terminal stretch at 1–21 (MNLRLSCLLFILVTSLPAGRC) is a signal peptide. 3 disulfide bridges follow: cysteine 33–cysteine 60, cysteine 40–cysteine 54, and cysteine 44–cysteine 61.

It belongs to the beta-defensin family. In terms of tissue distribution, epididymis-specific, with highest levels in the initial segment and distal caput.

Its subcellular location is the secreted. In terms of biological role, has bactericidal activity. May play a role in the antimicrobial protection of sperm and urogenital tract epithelia. The protein is Beta-defensin 42 of Mus musculus (Mouse).